Consider the following 1078-residue polypeptide: Phosphatidylinositol-3,5-bisphosphate 3-phosphatase MTMR4 (1078 aa).

One can recognise a Myotubularin phosphatase domain in the interval aspartate 154–tyrosine 571. The interval arginine 267–aspartate 290 is disordered. Residues asparagine 270–serine 282 are compositionally biased toward low complexity. A 1,2-diacyl-sn-glycero-3-phospho-(1D-myo-inositol-3,5-bisphosphate) contacts are provided by asparagine 321, asparagine 346, and isoleucine 347. The a 1,2-diacyl-sn-glycero-3-phospho-(1D-myo-inositol-3-phosphate) site is built by asparagine 321, asparagine 346, and isoleucine 347. The Phosphocysteine intermediate role is filled by cysteine 408. Residues serine 409, aspartate 410, glycine 411, tryptophan 412, aspartate 413, arginine 414, lysine 450, and arginine 454 each coordinate a 1,2-diacyl-sn-glycero-3-phospho-(1D-myo-inositol-3,5-bisphosphate). Residues serine 409, aspartate 410, glycine 411, tryptophan 412, aspartate 413, and arginine 414 each coordinate a 1,2-diacyl-sn-glycero-3-phospho-(1D-myo-inositol-3-phosphate). Residue arginine 454 participates in a 1,2-diacyl-sn-glycero-3-phospho-(1D-myo-inositol-3-phosphate) binding. The segment covering serine 629–lysine 648 has biased composition (polar residues). The tract at residues serine 629–asparagine 694 is disordered. Residues valine 904 to isoleucine 935 are a coiled coil. The tract at residues aspartate 960–glutamate 982 is disordered. A compositionally biased stretch (basic and acidic residues) spans tyrosine 968–glutamate 982. The FYVE-type zinc-finger motif lies at aspartate 997–glutamine 1057. Zn(2+)-binding residues include cysteine 1003, cysteine 1006, cysteine 1019, cysteine 1022, cysteine 1027, cysteine 1030, cysteine 1049, and cysteine 1052.

This sequence belongs to the protein-tyrosine phosphatase family. Non-receptor class myotubularin subfamily. In terms of assembly, homooligomeric.

The protein localises to the early endosome membrane. It localises to the recycling endosome membrane. Its subcellular location is the late endosome membrane. It is found in the cytoplasmic vesicle. The protein resides in the phagosome membrane. The enzyme catalyses a 1,2-diacyl-sn-glycero-3-phospho-(1D-myo-inositol-3-phosphate) + H2O = a 1,2-diacyl-sn-glycero-3-phospho-(1D-myo-inositol) + phosphate. The catalysed reaction is a 1,2-diacyl-sn-glycero-3-phospho-(1D-myo-inositol-3,5-bisphosphate) + H2O = a 1,2-diacyl-sn-glycero-3-phospho-(1D-myo-inositol-5-phosphate) + phosphate. It catalyses the reaction 1,2-dioctanoyl-sn-glycero-3-phospho-(1-D-myo-inositol-3-phosphate) + H2O = 1,2-dioctanoyl-sn-glycero-3-phospho-(1D-myo-inositol) + phosphate. It carries out the reaction 1,2-dioctanoyl-sn-glycero-3-phospho-(1D-myo-inositol-3,5-bisphosphate) + H2O = 1,2-dioctanoyl-sn-glycero-3-phospho-(1D-myo-inositol-5-phosphate) + phosphate. Functionally, lipid phosphatase that specifically dephosphorylates the D-3 position of phosphatidylinositol 3-phosphate and phosphatidylinositol 3,5-bisphosphate, generating phosphatidylinositol and phosphatidylinositol 5-phosphate. Decreases the levels of phosphatidylinositol 3-phosphate, a phospholipid found in cell membranes where it acts as key regulator of both cell signaling and intracellular membrane traffic, in a subset of endosomal membranes to negatively regulate both endocytic recycling and trafficking and/or maturation of endosomes toward lysosomes. Through phosphatidylinositol 3-phosphate turnover in phagosome membranes regulates phagocytosis and phagosome maturation. By decreasing phosphatidylinositol 3-monophosphate (PI3P) levels in immune cells it can also regulate the innate immune response. Beside its lipid phosphatase activity, can also function as a molecular adapter to regulate midbody abscission during mitotic cytokinesis. Can also negatively regulate TGF-beta and BMP signaling through Smad proteins dephosphorylation and retention in endosomes. The chain is Phosphatidylinositol-3,5-bisphosphate 3-phosphatase MTMR4 (mtmr4) from Xenopus laevis (African clawed frog).